A 238-amino-acid polypeptide reads, in one-letter code: Sugar fermentation stimulation protein homolog (238 aa).

Belongs to the SfsA family.

The sequence is that of Sugar fermentation stimulation protein homolog from Haemophilus influenzae (strain 86-028NP).